The following is a 177-amino-acid chain: Zinc metalloproteinase-disintegrin-like scutiarin (177 aa).

The Disintegrin domain maps to 1–63; sequence NPCCDAATCK…ECPADVFHKN (63 aa). Cystine bridges form between cysteine 3-cysteine 26, cysteine 17-cysteine 23, cysteine 22-cysteine 48, cysteine 35-cysteine 55, cysteine 42-cysteine 74, cysteine 67-cysteine 79, cysteine 86-cysteine 136, cysteine 101-cysteine 147, cysteine 114-cysteine 124, and cysteine 131-cysteine 173. The D/ECD-tripeptide motif lies at 41–43; the sequence is ECD. The Ca(2+) site is built by aspartate 43, proline 44, glutamate 46, aspartate 58, and valine 59.

Belongs to the venom metalloproteinase (M12B) family. P-III subfamily. P-IIIa sub-subfamily. Monomer. Zn(2+) is required as a cofactor. Glycosylated. As to expression, expressed by the venom gland.

The protein resides in the secreted. In terms of biological role, snake venom metalloproteinase that impairs hemostasis in the envenomed animal. The polypeptide is Zinc metalloproteinase-disintegrin-like scutiarin (Crotalus scutulatus scutulatus (Mojave rattlesnake)).